The sequence spans 505 residues: Ribose import ATP-binding protein RbsA 1 (505 aa).

ABC transporter domains follow at residues 13-249 (LALR…VGRD) and 254-503 (YPKQ…TGRA). 45-52 (GENGAGKS) lines the ATP pocket.

The protein belongs to the ABC transporter superfamily. Ribose importer (TC 3.A.1.2.1) family. In terms of assembly, the complex is composed of an ATP-binding protein (RbsA), two transmembrane proteins (RbsC) and a solute-binding protein (RbsB).

Its subcellular location is the cell membrane. It catalyses the reaction D-ribose(out) + ATP + H2O = D-ribose(in) + ADP + phosphate + H(+). Functionally, part of the ABC transporter complex RbsABC involved in ribose import. Responsible for energy coupling to the transport system. This is Ribose import ATP-binding protein RbsA 1 from Streptomyces coelicolor (strain ATCC BAA-471 / A3(2) / M145).